The chain runs to 101 residues: NADH-quinone oxidoreductase subunit K (101 aa).

3 consecutive transmembrane segments (helical) span residues 4 to 24 (LGHL…GIFL), 30 to 50 (IVLL…FIAF), and 62 to 82 (FVFF…AILV).

It belongs to the complex I subunit 4L family. In terms of assembly, NDH-1 is composed of 14 different subunits. Subunits NuoA, H, J, K, L, M, N constitute the membrane sector of the complex.

Its subcellular location is the cell inner membrane. The catalysed reaction is a quinone + NADH + 5 H(+)(in) = a quinol + NAD(+) + 4 H(+)(out). NDH-1 shuttles electrons from NADH, via FMN and iron-sulfur (Fe-S) centers, to quinones in the respiratory chain. The immediate electron acceptor for the enzyme in this species is believed to be ubiquinone. Couples the redox reaction to proton translocation (for every two electrons transferred, four hydrogen ions are translocated across the cytoplasmic membrane), and thus conserves the redox energy in a proton gradient. This chain is NADH-quinone oxidoreductase subunit K, found in Xanthomonas axonopodis pv. citri (strain 306).